Here is a 385-residue protein sequence, read N- to C-terminus: Ribosomal RNA large subunit methyltransferase G (385 aa).

It belongs to the methyltransferase superfamily. RlmG family.

The protein localises to the cytoplasm. The catalysed reaction is guanosine(1835) in 23S rRNA + S-adenosyl-L-methionine = N(2)-methylguanosine(1835) in 23S rRNA + S-adenosyl-L-homocysteine + H(+). In terms of biological role, specifically methylates the guanine in position 1835 (m2G1835) of 23S rRNA. This chain is Ribosomal RNA large subunit methyltransferase G, found in Vibrio campbellii (strain ATCC BAA-1116).